A 287-amino-acid chain; its full sequence is Co-chaperone protein DjlA (287 aa).

Residues 1–6 (MQIFGK) are Periplasmic-facing. A helical membrane pass occupies residues 7 to 30 (ILGAFFGFLFGGVFGALFGLFIGH). Over 31–287 (QFDKARRLSQ…DLIKKEKGFK (257 aa)) the chain is Cytoplasmic. The tract at residues 192 to 213 (GGFGGQQHQSHHSSSHGGWQQA) is disordered. Residues 221–287 (DAYKILGIDA…DLIKKEKGFK (67 aa)) enclose the J domain.

As to quaternary structure, homodimer.

Its subcellular location is the cell inner membrane. In terms of biological role, regulatory DnaK co-chaperone. Direct interaction between DnaK and DjlA is needed for the induction of the wcaABCDE operon, involved in the synthesis of a colanic acid polysaccharide capsule, possibly through activation of the RcsB/RcsC phosphotransfer signaling pathway. The colanic acid capsule may help the bacterium survive conditions outside the host. The chain is Co-chaperone protein DjlA from Vibrio vulnificus (strain YJ016).